We begin with the raw amino-acid sequence, 228 residues long: Ribonuclease 3 (228 aa).

An RNase III domain is found at 5–128; it reads LNRLMARLGY…IIGAMLLDGG (124 aa). Glu-41 serves as a coordination point for Mg(2+). The active site involves Asp-45. Residues Asp-114 and Glu-117 each coordinate Mg(2+). The active site involves Glu-117. A DRBM domain is found at 155–225; that stretch reads DAKTRLQEWL…ASLALEWLEQ (71 aa).

Belongs to the ribonuclease III family. Homodimer. The cofactor is Mg(2+).

It localises to the cytoplasm. It carries out the reaction Endonucleolytic cleavage to 5'-phosphomonoester.. In terms of biological role, digests double-stranded RNA. Involved in the processing of primary rRNA transcript to yield the immediate precursors to the large and small rRNAs (23S and 16S). Processes some mRNAs, and tRNAs when they are encoded in the rRNA operon. Processes pre-crRNA and tracrRNA of type II CRISPR loci if present in the organism. The protein is Ribonuclease 3 of Alcanivorax borkumensis (strain ATCC 700651 / DSM 11573 / NCIMB 13689 / SK2).